Here is a 346-residue protein sequence, read N- to C-terminus: tRNA(Ile)-lysidine synthase (346 aa).

An ATP-binding site is contributed by 32-37 (SGGPDS).

This sequence belongs to the tRNA(Ile)-lysidine synthase family.

Its subcellular location is the cytoplasm. The enzyme catalyses cytidine(34) in tRNA(Ile2) + L-lysine + ATP = lysidine(34) in tRNA(Ile2) + AMP + diphosphate + H(+). Its function is as follows. Ligates lysine onto the cytidine present at position 34 of the AUA codon-specific tRNA(Ile) that contains the anticodon CAU, in an ATP-dependent manner. Cytidine is converted to lysidine, thus changing the amino acid specificity of the tRNA from methionine to isoleucine. In Rhodopseudomonas palustris (strain ATCC BAA-98 / CGA009), this protein is tRNA(Ile)-lysidine synthase.